We begin with the raw amino-acid sequence, 247 residues long: PABIR family member 2 (247 aa).

Residues 1-23 (MAQEKMELDLEPDTSYGGTLRRS) form a disordered region. Alanine 2 carries the N-acetylalanine modification. Phosphoserine occurs at positions 25, 33, 50, 58, and 63. The tract at residues 82–104 (ISQSWDESLSLSDSDFDKPEKLY) is disordered. Low complexity predominate over residues 83-94 (SQSWDESLSLSD). Threonine 112 carries the post-translational modification Phosphothreonine. Phosphoserine occurs at positions 115 and 119. Arginine 122 is subject to Omega-N-methylarginine. Disordered regions lie at residues 129 to 152 (VSSS…SQSP), 158 to 177 (PSVL…SQPK), and 202 to 230 (DILD…SPVA). Serine 137 and serine 141 each carry phosphoserine. Residues 166-176 (RKGEMETESQP) show a composition bias toward basic and acidic residues. Over residues 202–216 (DILDGSSSSSGLSSD) the composition is skewed to low complexity.

This sequence belongs to the FAM122 family. Isoform 3 and isoform 4 are phosphorylated on Ser-62 and Ser-64.

This is PABIR family member 2 from Homo sapiens (Human).